A 119-amino-acid chain; its full sequence is Large ribosomal subunit protein bL20 (119 aa).

It belongs to the bacterial ribosomal protein bL20 family.

Functionally, binds directly to 23S ribosomal RNA and is necessary for the in vitro assembly process of the 50S ribosomal subunit. It is not involved in the protein synthesizing functions of that subunit. The sequence is that of Large ribosomal subunit protein bL20 from Mycoplasma capricolum subsp. capricolum (strain California kid / ATCC 27343 / NCTC 10154).